A 512-amino-acid polypeptide reads, in one-letter code: Keratin, type I cytoskeletal 24 (512 aa).

A disordered region spans residues 1-21 (MFCSAQKGSCSSRVSSSGAVG). Residues 1 to 140 (MFCSAQKGSC…GYDGGLLSGS (140 aa)) form a head region. Residues 8 to 21 (GSCSSRVSSSGAVG) show a composition bias toward low complexity. The coil 1A stretch occupies residues 141–176 (EKQTMQDLNDRLANYLDKVRALEEANTDLECKIKDW). The IF rod domain maps to 141–455 (EKQTMQDLND…RLLNGDGGGC (315 aa)). Positions 177-197 (YGKHGSVKGGSGRDYSQYYSI) are linker 1. Positions 198 to 289 (IEDLKKQILS…KNHEEEMKCM (92 aa)) are coil 1B. Positions 290–312 (QGSSGGDVTVEMNAAPGVDLTKL) are linker 12. The interval 313–451 (LNDMRAQYEA…ETYRRLLNGD (139 aa)) is coil 2. Residues 452-512 (GGGCDYRNLV…VSNISEVKIK (61 aa)) form a tail region.

This sequence belongs to the intermediate filament family. As to quaternary structure, heterotetramer of two type I and two type II keratins.

This is Keratin, type I cytoskeletal 24 (Krt24) from Mus musculus (Mouse).